Here is a 274-residue protein sequence, read N- to C-terminus: MAIHLYKTSTPSTRNGAVDSQVKSNTRNNLIYGQHRCGKGRNSRGIITARHRGGGHKRLYRKIDFRRNEKYIYGRIVTIEYDPNRNAYICLIHYGDGEKRYILHPRGAIIGDTIISGTEVPIKMGNALPLTDMPLGTAIHNIEITLGRGGQLARAAGAVAKLIAKEGKSATLKLPSGEVRLISKNCSATVGQVGNAGVNQKSLGRAGSKCWLGKRPVVRGVVMNPVDHPHGGGEGRAPIGRKKPATPWGYPALGRRSRKRNKYSDNLILRRRSK.

2 disordered regions span residues 1 to 21 and 224 to 274; these read MAIHLYKTSTPSTRNGAVDSQ and NPVD…RRSK.

The protein belongs to the universal ribosomal protein uL2 family. Part of the 50S ribosomal subunit.

Its subcellular location is the plastid. The protein localises to the chloroplast. In Populus trichocarpa (Western balsam poplar), this protein is Large ribosomal subunit protein uL2cz/uL2cy (rpl2-A).